We begin with the raw amino-acid sequence, 28 residues long: Conotoxin Cal6.43b (28 aa).

Cystine bridges form between cysteine 3–cysteine 13, cysteine 7–cysteine 19, and cysteine 12–cysteine 25.

Expressed by the venom duct.

The protein resides in the secreted. Its function is as follows. Probable neurotoxin with unknown target. Possibly targets ion channels. This is Conotoxin Cal6.43b from Californiconus californicus (California cone).